The primary structure comprises 710 residues: Lactoperoxidase (710 aa).

The signal sequence occupies residues 1–23; the sequence is MKVLLHLPALLASLTLLQTAASA. Positions 24 to 80 are excised as a propeptide; the sequence is SDDPTAETDIIHDTVEEVKVWVNKAFLDSRDRLKMAMTTKIHSTRHLSDYLKHAKGR. A disulfide bond links Cys-130 and Cys-143. Position 223 (Asp-223) interacts with heme b. Catalysis depends on His-224, which acts as the Proton acceptor. Asp-225 is a Ca(2+) binding site. 2 cysteine pairs are disulfide-bonded: Cys-244–Cys-254 and Cys-248–Cys-272. Ca(2+) contacts are provided by Thr-299, Phe-301, Asp-303, and Ser-305. Ser-313 carries the post-translational modification Phosphoserine. Cys-352 and Cys-363 are joined by a disulfide. 2 residues coordinate heme b: Glu-373 and His-466. Position 480 is a 3'-nitrotyrosine (Tyr-480). Disulfide bonds link Cys-571–Cys-628 and Cys-669–Cys-694.

It belongs to the peroxidase family. It depends on Ca(2+) as a cofactor. Heme b is required as a cofactor. In terms of tissue distribution, expressed in the colon, including colonocytes and mucin-containing goblet cells. Not detected in the ileum.

The protein localises to the secreted. It is found in the cytoplasm. It carries out the reaction 2 a phenolic donor + H2O2 = 2 a phenolic radical donor + 2 H2O. It catalyses the reaction thiocyanate + H2O2 + H(+) = hypothiocyanous acid + H2O. The catalysed reaction is iodide + H2O2 = hypoiodite + H2O. Heme-containing oxidoreductase which catalyzes the conversion of thiocyanate (SCN(-)) into antimicrobial agent hypothiocyanous acid (OSCN(-)) in the presence of hydrogen peroxide (H2O2). Also involved in the conversion of iodide (I(-)) into hypoiodite (IO(-)) in the presence of H2O2. Responsible for the inactivation of a wide range of micro-organisms and hence, important component of defense mechanism. May be implicated in airway host defense against infection. May contribute to maintaining an appropriate H2O2 cellular level, therefore protecting cells from H2O2-caused injuries and inflammation. This chain is Lactoperoxidase, found in Mus musculus (Mouse).